The primary structure comprises 621 residues: Pentatricopeptide repeat-containing protein At3g48250, chloroplastic (621 aa).

The N-terminal 67 residues, 1-67 (MYRSMAILSS…SKPDSMLQLV (67 aa)), are a transit peptide targeting the chloroplast. 10 PPR repeats span residues 122–156 (STPL…GFYL), 157–194 (DEDT…NAMS), 262–296 (STVT…GYDM), 297–331 (DLDT…PFKP), 332–368 (SIQD…GKSL), 369–403 (SKAV…GYEP), 404–438 (DNIT…GCFP), 439–473 (DIKT…GFDI), 474–509 (DSNL…NVKP), and 510–544 (WQST…NYPA).

It belongs to the PPR family. P subfamily.

The protein resides in the plastid. Its subcellular location is the chloroplast. In Arabidopsis thaliana (Mouse-ear cress), this protein is Pentatricopeptide repeat-containing protein At3g48250, chloroplastic.